The chain runs to 146 residues: Angiogenin (146 aa).

The N-terminal stretch at 1 to 24 (MVMGLGLFLLVFMLGLGLTLPTLA) is a signal peptide. Glutamine 25 is modified (pyrrolidone carboxylic acid). Histidine 37 serves as the catalytic Proton acceptor. Arginine 45 contacts tRNA. Intrachain disulfides connect cysteine 50–cysteine 105, cysteine 63–cysteine 116, and cysteine 81–cysteine 131. Positions 55 to 59 (RRRHL) match the Nucleolar localization signal motif. Cysteine 105 and isoleucine 127 together coordinate tRNA. Catalysis depends on histidine 138, which acts as the Proton donor.

Belongs to the pancreatic ribonuclease family. Homodimer. Interacts with RNH1; inhibiting ANG ribonuclease activity. Interacts with PCNA.

It is found in the secreted. The protein localises to the nucleus. The protein resides in the nucleolus. Its subcellular location is the cytoplasm. It localises to the stress granule. With respect to regulation, has weak tRNA ribonuclease activity by itself due to partial autoinhibition by its C-terminus, which folds into a short alpha-helix that partially occludes the substrate-binding site. In absence of stress, the ribonuclease activity is inhibited by RNH1 in the cytoplasm. In response to stress, dissociates from RNH1 in the cytoplasm and associates with cytoplasmic ribosomes with vacant A-sites: ribosomes directly activate the tRNA ribonuclease activity of ANG by refolding the C-terminal alpha-helix. In response to stress, the angiogenic activity of ANG is inhibited by RNH1 in the nucleus. In terms of biological role, secreted ribonuclease that can either promote or restrict cell proliferation of target cells, depending on the context. Endocytosed in target cells via its receptor PLXNB2 and translocates to the cytoplasm or nucleus. Under stress conditions, localizes to the cytoplasm and promotes the assembly of stress granules (SGs): specifically cleaves a subset of tRNAs within anticodon loops to produce tRNA-derived stress-induced fragments (tiRNAs), resulting in translation repression and inhibition of cell proliferation. tiRNas also prevent formation of apoptosome, thereby promoting cell survival. Preferentially cleaves RNAs between a pyrimidine and an adenosine residue, suggesting that it cleaves the anticodon loop of tRNA(Ala) (32-UUAGCAU-38) after positions 33 and 36. Cleaves a subset of tRNAs, including tRNA(Ala), tRNA(Glu), tRNA(Gly), tRNA(Lys), tRNA(Val), tRNA(His), tRNA(Asp) and tRNA(Sec). Under growth conditions and in differentiated cells, translocates to the nucleus and stimulates ribosomal RNA (rRNA) transcription, including that containing the initiation site sequences of 45S rRNA, thereby promoting cell growth and proliferation. Angiogenin induces vascularization of normal and malignant tissues via its ability to promote rRNA transcription. Involved in hematopoietic stem and progenitor cell (HSPC) growth and survival by promoting rRNA transcription in growth conditions and inhibiting translation in response to stress, respectively. Mediates the crosstalk between myeloid and intestinal epithelial cells to protect the intestinal epithelial barrier integrity: secreted by myeloid cells and promotes intestinal epithelial cells proliferation and survival. Also mediates osteoclast-endothelial cell crosstalk in growing bone: produced by osteoclasts and protects the neighboring vascular cells against senescence by promoting rRNA transcription. In Papio hamadryas (Hamadryas baboon), this protein is Angiogenin (ANG).